The following is a 92-amino-acid chain: Small ribosomal subunit protein uS19c (92 aa).

The protein belongs to the universal ribosomal protein uS19 family.

Its subcellular location is the plastid. The protein localises to the chloroplast. Its function is as follows. Protein S19 forms a complex with S13 that binds strongly to the 16S ribosomal RNA. In Phaseolus angularis (Azuki bean), this protein is Small ribosomal subunit protein uS19c.